The following is a 64-amino-acid chain: Phylloxin-B1 (64 aa).

The first 22 residues, 1–22, serve as a signal peptide directing secretion; sequence MVFLKKSLLLVLFVGLVSLSIC. Residues 23–42 constitute a propeptide that is removed on maturation; the sequence is EENKREEHEEIEENKEKAEE. Gln63 carries the post-translational modification Glutamine amide.

In terms of tissue distribution, expressed by the skin glands.

Its subcellular location is the secreted. Its function is as follows. Antimicrobial peptide against the wall-less bacteria A.laidlawii and S.melliferum, the Gram-positive bacteria B.megaterium KM, C.glutamicum ATCC 27853 and M.luteus ATCC 27853 and the Gram-negative-bacteria R.meliloti 102F34 and E.coli K12. This Phyllomedusa bicolor (Two-colored leaf frog) protein is Phylloxin-B1.